A 321-amino-acid chain; its full sequence is Methionine import ATP-binding protein MetN (321 aa).

Residues 2-241 (INAVDLHKVY…PGSLLARSLF (240 aa)) enclose the ABC transporter domain. An ATP-binding site is contributed by 38–45 (GPSGAGKS).

This sequence belongs to the ABC transporter superfamily. Methionine importer (TC 3.A.1.24) family. The complex is composed of two ATP-binding proteins (MetN), two transmembrane proteins (MetI) and a solute-binding protein (MetQ).

Its subcellular location is the cell membrane. The enzyme catalyses L-methionine(out) + ATP + H2O = L-methionine(in) + ADP + phosphate + H(+). The catalysed reaction is D-methionine(out) + ATP + H2O = D-methionine(in) + ADP + phosphate + H(+). Functionally, part of the ABC transporter complex MetNIQ involved in methionine import. Responsible for energy coupling to the transport system. The chain is Methionine import ATP-binding protein MetN from Thermobifida fusca (strain YX).